We begin with the raw amino-acid sequence, 68 residues long: Disintegrin EMF10B (68 aa).

A Disintegrin domain is found at 1-68; that stretch reads ELLQNSGNPC…SDCPRNPVFK (68 aa). 4 cysteine pairs are disulfide-bonded: Cys10/Cys33, Cys24/Cys30, Cys29/Cys54, and Cys42/Cys61. Residues 46–48 carry the Cell attachment site; atypical (MGD) motif; the sequence is MGD.

This sequence belongs to the venom metalloproteinase (M12B) family. P-II subfamily. P-IIe sub-subfamily. In terms of assembly, heterodimer with EMF10A; disulfide-linked. As to expression, expressed by the venom gland.

The protein localises to the secreted. Extremely potent and selective inhibitor of integrin alpha-5/beta-1 (ITGA5/ITGB1). Partially inhibits adhesion of cells expressing alpha-IIb/beta-3 (ITGA2B/ITGB3), alpha-V/beta-3 (ITGAV/ITGB3), and alpha-4/beta-1 (ITGA4/ITGB1) to appropriate ligands only at concentration higher than 500 nM. Weakly inhibits ADP-induced platelet aggregation. The chain is Disintegrin EMF10B from Eristicophis macmahoni (Leaf-nosed viper).